The chain runs to 122 residues: MIQQETRLKVADNSGAREVLTIKVLGGSGRKTANIGDVIVCTVKNATPGGVVKKGEVVKAVVVRTKSGVRRKDGSYIKFDENACVVIRDDKSPRGTRIFGPVARELRDNNYMKIISLAPEVL.

This sequence belongs to the universal ribosomal protein uL14 family. In terms of assembly, part of the 50S ribosomal subunit. Forms a cluster with proteins L3 and L19. In the 70S ribosome, L14 and L19 interact and together make contacts with the 16S rRNA in bridges B5 and B8.

Its function is as follows. Binds to 23S rRNA. Forms part of two intersubunit bridges in the 70S ribosome. This Staphylococcus carnosus (strain TM300) protein is Large ribosomal subunit protein uL14.